The following is a 175-amino-acid chain: Ribosome maturation factor RimM (175 aa).

Residues 96 to 175 (EGDYYWHDLI…TIEVDWDAGF (80 aa)) enclose the PRC barrel domain.

This sequence belongs to the RimM family. In terms of assembly, binds ribosomal protein uS19.

Its subcellular location is the cytoplasm. Functionally, an accessory protein needed during the final step in the assembly of 30S ribosomal subunit, possibly for assembly of the head region. Essential for efficient processing of 16S rRNA. May be needed both before and after RbfA during the maturation of 16S rRNA. It has affinity for free ribosomal 30S subunits but not for 70S ribosomes. This Actinobacillus succinogenes (strain ATCC 55618 / DSM 22257 / CCUG 43843 / 130Z) protein is Ribosome maturation factor RimM.